A 918-amino-acid chain; its full sequence is Leucine--tRNA ligase (918 aa).

A 'HIGH' region motif is present at residues 40–51 (PYPSGVGLHVGH). Positions 692 to 696 (KMSKS) match the 'KMSKS' region motif. Position 695 (lysine 695) interacts with ATP.

It belongs to the class-I aminoacyl-tRNA synthetase family.

Its subcellular location is the cytoplasm. The catalysed reaction is tRNA(Leu) + L-leucine + ATP = L-leucyl-tRNA(Leu) + AMP + diphosphate. In Azobacteroides pseudotrichonymphae genomovar. CFP2, this protein is Leucine--tRNA ligase.